We begin with the raw amino-acid sequence, 1004 residues long: Ephrin type-A receptor 8 (1004 aa).

Residues 1-26 form the signal peptide; that stretch reads MAPARARLSPALWVVTAAAAATCVSA. The Extracellular portion of the chain corresponds to 27–541; it reads GRGEVNLLDT…KPRPRYDTRT (515 aa). The 179-residue stretch at 30–208 folds into the Eph LBD domain; that stretch reads EVNLLDTSTI…YYKKCPAMVR (179 aa). 2 Fibronectin type-III domains span residues 327–437 and 438–533; these read PPSA…TNQA and APSQ…TGKP. N-linked (GlcNAc...) asparagine glycans are attached at residues Asn339, Asn406, and Asn431. Residues 542–562 form a helical membrane-spanning segment; the sequence is IVWICLTLITGLVVLLLLLIC. The mediates interaction with ANKS1A and ANKS1B stretch occupies residues 563 to 569; it reads KKRHCGY. The Cytoplasmic portion of the chain corresponds to 563–1004; sequence KKRHCGYSKA…SSTQGPRRHL (442 aa). The mediates interaction with PIK3CG and required for endocytosis stretch occupies residues 588-643; the sequence is APPPVFLPLNHPPGKFPETQFSAEPHTYEEPGRAGRSFTREIEASRIHIEKIIGSG. Tyr615 bears the Phosphotyrosine; by autocatalysis mark. Residues 634-895 enclose the Protein kinase domain; that stretch reads IHIEKIIGSG…HVVSVLDALV (262 aa). Residues 640 to 648 and Lys666 contribute to the ATP site; that span reads IGSGESGEV. Asp759 serves as the catalytic Proton acceptor. At Tyr838 the chain carries Phosphotyrosine; by autocatalysis. Positions 929–993 constitute an SAM domain; sequence NGDLTVGDWL…LGSIQTMRAQ (65 aa). A PDZ-binding motif is present at residues 1002 to 1004; the sequence is RHL.

It belongs to the protein kinase superfamily. Tyr protein kinase family. Ephrin receptor subfamily. As to quaternary structure, heterotetramer upon binding of the ligand. The heterotetramer is composed of an ephrin dimer and a receptor dimer. Oligomerization is probably required to induce biological responses. May also form heterodimers with other ephrin receptors. Interacts with FYN; possible downstream effector of EPHA8 in regulation of cell adhesion. Interacts with PIK3CG; regulates integrin-mediated cell adhesion to substrate. Interacts with TIAM1; regulates clathrin-mediated endocytosis of EPHA8. Interacts with ANKS1A and ANKS1B; EPHA8 kinase activity-independent but stimulated by EPHA8 ubiquitination. In terms of processing, phosphorylated. Phosphorylation is stimulated upon binding of its ligands including EFNA2, EFNA3 and EFNA5. Autophosphorylation on Tyr-615 is critical for association with FYN. Autophosphorylation on Tyr-838 modulates tyrosine kinase activity. Post-translationally, ubiquitinated. Ubiquitination by CBL regulates the receptor stability and activity through proteasomal degradation. ANKS1A prevents ubiquitination and degradation. As to expression, specifically expressed in the central nervous system.

It localises to the cell membrane. Its subcellular location is the cell projection. It is found in the early endosome membrane. The catalysed reaction is L-tyrosyl-[protein] + ATP = O-phospho-L-tyrosyl-[protein] + ADP + H(+). Functionally, receptor tyrosine kinase which binds promiscuously GPI-anchored ephrin-A family ligands residing on adjacent cells, leading to contact-dependent bidirectional signaling into neighboring cells. The signaling pathway downstream of the receptor is referred to as forward signaling while the signaling pathway downstream of the ephrin ligand is referred to as reverse signaling. The GPI-anchored ephrin-A EFNA2, EFNA3, and EFNA5 are able to activate EPHA8 through phosphorylation. With EFNA5 may regulate integrin-mediated cell adhesion and migration on fibronectin substrate but also neurite outgrowth. During development of the nervous system also plays a role in axon guidance. Downstream effectors of the EPHA8 signaling pathway include FYN which promotes cell adhesion upon activation by EPHA8 and the MAP kinases in the stimulation of neurite outgrowth. The protein is Ephrin type-A receptor 8 (Epha8) of Mus musculus (Mouse).